We begin with the raw amino-acid sequence, 424 residues long: Imidazolonepropionase (424 aa).

Fe(3+)-binding residues include His84 and His86. His84 and His86 together coordinate Zn(2+). Positions 93, 156, and 189 each coordinate 4-imidazolone-5-propanoate. Tyr156 is an N-formimidoyl-L-glutamate binding site. A Fe(3+)-binding site is contributed by His254. Residue His254 participates in Zn(2+) binding. Glu257 contacts 4-imidazolone-5-propanoate. A Fe(3+)-binding site is contributed by Asp328. Zn(2+) is bound at residue Asp328. 2 residues coordinate N-formimidoyl-L-glutamate: Asn330 and Gly332. Ser333 contributes to the 4-imidazolone-5-propanoate binding site.

This sequence belongs to the metallo-dependent hydrolases superfamily. HutI family. Zn(2+) is required as a cofactor. The cofactor is Fe(3+).

The protein localises to the cytoplasm. It catalyses the reaction 4-imidazolone-5-propanoate + H2O = N-formimidoyl-L-glutamate. The protein operates within amino-acid degradation; L-histidine degradation into L-glutamate; N-formimidoyl-L-glutamate from L-histidine: step 3/3. In terms of biological role, catalyzes the hydrolytic cleavage of the carbon-nitrogen bond in imidazolone-5-propanoate to yield N-formimidoyl-L-glutamate. It is the third step in the universal histidine degradation pathway. This chain is Imidazolonepropionase, found in Geobacillus thermodenitrificans (strain NG80-2).